A 507-amino-acid chain; its full sequence is ATP synthase subunit alpha, chloroplastic (507 aa).

170 to 177 is an ATP binding site; that stretch reads GDRQTGKT.

The protein belongs to the ATPase alpha/beta chains family. F-type ATPases have 2 components, CF(1) - the catalytic core - and CF(0) - the membrane proton channel. CF(1) has five subunits: alpha(3), beta(3), gamma(1), delta(1), epsilon(1). CF(0) has four main subunits: a, b, b' and c.

It localises to the plastid. The protein localises to the chloroplast thylakoid membrane. It carries out the reaction ATP + H2O + 4 H(+)(in) = ADP + phosphate + 5 H(+)(out). Functionally, produces ATP from ADP in the presence of a proton gradient across the membrane. The alpha chain is a regulatory subunit. In Nicotiana tabacum (Common tobacco), this protein is ATP synthase subunit alpha, chloroplastic.